A 475-amino-acid polypeptide reads, in one-letter code: Ribulose bisphosphate carboxylase large chain (475 aa).

A propeptide spanning residues 1-2 is cleaved from the precursor; the sequence is MS. Residue proline 3 is modified to N-acetylproline. N6,N6,N6-trimethyllysine is present on lysine 14. Substrate is bound by residues asparagine 123 and threonine 173. Lysine 175 acts as the Proton acceptor in catalysis. Lysine 177 is a binding site for substrate. Mg(2+)-binding residues include lysine 201, aspartate 203, and glutamate 204. Position 201 is an N6-carboxylysine (lysine 201). Residue histidine 294 is the Proton acceptor of the active site. Substrate contacts are provided by arginine 295, histidine 327, and serine 379.

This sequence belongs to the RuBisCO large chain family. Type I subfamily. As to quaternary structure, heterohexadecamer of 8 large chains and 8 small chains; disulfide-linked. The disulfide link is formed within the large subunit homodimers. It depends on Mg(2+) as a cofactor. Post-translationally, the disulfide bond which can form in the large chain dimeric partners within the hexadecamer appears to be associated with oxidative stress and protein turnover.

It localises to the plastid. Its subcellular location is the chloroplast. The enzyme catalyses 2 (2R)-3-phosphoglycerate + 2 H(+) = D-ribulose 1,5-bisphosphate + CO2 + H2O. It carries out the reaction D-ribulose 1,5-bisphosphate + O2 = 2-phosphoglycolate + (2R)-3-phosphoglycerate + 2 H(+). In terms of biological role, ruBisCO catalyzes two reactions: the carboxylation of D-ribulose 1,5-bisphosphate, the primary event in carbon dioxide fixation, as well as the oxidative fragmentation of the pentose substrate in the photorespiration process. Both reactions occur simultaneously and in competition at the same active site. This chain is Ribulose bisphosphate carboxylase large chain, found in Plumbago auriculata (Cape leadwort).